A 60-amino-acid polypeptide reads, in one-letter code: Pepsin-3 (60 aa).

Residues I1–F35 constitute a propeptide, activation peptide.

This sequence belongs to the peptidase A1 family.

This Thunnus orientalis (North Pacific bluefin tuna) protein is Pepsin-3.